We begin with the raw amino-acid sequence, 904 residues long: Disks large homolog 1 (904 aa).

Positions 4–64 (RKQDTQRALH…FYEVTLLDNP (61 aa)) constitute an L27 domain. Residue threonine 115 is modified to Phosphothreonine. 3 positions are modified to phosphoserine: serine 122, serine 138, and serine 158. Residues 162-212 (PTEAVLPSPPTVPVIPVLPVPAENTVILPTIPQANPPPVLVNTDSLETPTY) are interaction with SH3 domains. PDZ domains are found at residues 224 to 310 (EITL…VKRR), 319 to 405 (EIKL…VAKP), and 466 to 546 (KVVL…AQYR). Residues 224-546 (EITLERGNSG…QAVTIVAQYR (323 aa)) form a required for interaction with MARCHF2 region. Serine 232 is subject to Phosphoserine. Tyrosine 399 is modified (phosphotyrosine). Phosphoserine occurs at positions 568, 573, 575, 579, 598, 619, 676, 684, 687, 709, and 834. Residues 581-651 (KRSLYVRALF…PSKRRVEKKE (71 aa)) form the SH3 domain. Positions 662–693 (SKTRDKGEIPDDMGSKGLKHVTSNASDSESSY) are disordered. A compositionally biased stretch (polar residues) spans 682-693 (VTSNASDSESSY). A Guanylate kinase-like domain is found at 714–889 (TRPVIILGPM…IYNQVKQIIE (176 aa)).

The protein belongs to the MAGUK family. Homotetramer. Interacts (via guanylate kinase-like domain) with DLGAP1, DLGAP2, DLGAP3, DLGAP4 and MAP1A. Interacts (via guanylate kinase-like domain) with KIF13B. May interact with HTR2A. Interacts (via PDZ domains) with GRIA1. Interacts (via PDZ domains) with GRIN2A. Interacts (via PDZ domains) with KCND2 and KCND3. Interacts (via PDZ domains) with KCNA1, KCNA2, KCNA3 and KCNA4. Interacts (via PDZ domains) with ADGRA3. Interacts with KCNF1. Interacts with CAMK2. Interacts with cytoskeleton-associated protein EPB41. Interacts with cytoskeleton-associated protein EZR. Found in a complex with KCNA5 and CAV3. Found in a complex with APC and CTNNB1. Interacts (via PDZ domains) with APC. Interacts with CDH1 through binding to PIK3R1. Forms multiprotein complexes with CASK, LIN7A, LIN7B, LIN7C, APBA1, and KCNJ12. Interacts with TOPK. Forms a tripartite complex composed of DLG1, MPP7 and LIN7 (LIN7A or LIN7C). May interact with TJAP1. Interacts with PTEN. Interacts with FRMPD4 (via C-terminus). Interacts with LRFN1, LRFN2 and LRFN4. Interacts with SFPQ. Interacts (via PDZ domains) with ADGRA2 (via PDZ-binding motif). Interacts with ADAM10; this interaction recruits ADAM10 to the cell membrane during long-term depression in hippocampal neurons. Interacts with DGKI (via PDZ-binding motif). Interacts (via PDZ domains) with MARCHF2 (via PDZ domain); the interaction leads to DLG1 ubiqtuitination and degradation. Interacts (via N-terminus) with MPP3; this interaction connects CADM1 with DLG1 and links CADM1 with the regulatory subunit of phosphoinositide-3-kinase (PI3K) by forming a multiprotein complex and participates in cell spreading. As to quaternary structure, (Microbial infection) Interacts with HTLV-1 protein Tax. In terms of assembly, (Microbial infection) Interacts (via PDZ domains 1 and 2) with influenza A virus protein NS1; the interaction results in the translocation of DLG1 from the cell membrane to perinuclear puncta. Acts as a scaffold protein to facilitate the interaction between LIN7C and influenza A virus protein NS1; the interaction facilitates translocation of LIN7C to cytoplasmic puncta. (Microbial infection) Interacts with human papillomavirus 18/HPV-18 protein E6. Post-translationally, phosphorylated by MAPK12. Phosphorylation of Ser-232 regulates association with GRIN2A. Ubiquitinated; by MARCHF2 which results in its degradation. As to expression, abundantly expressed in atrial myocardium (at protein level). Expressed in lung fibroblasts, cervical epithelial and B-cells (at protein level). Expressed in the brain (at protein level). Widely expressed, with isoforms displaying different expression profiles.

The protein localises to the cell membrane. It localises to the basolateral cell membrane. It is found in the endoplasmic reticulum membrane. Its subcellular location is the postsynaptic density. The protein resides in the synapse. The protein localises to the sarcolemma. It localises to the apical cell membrane. It is found in the cell junction. Its subcellular location is the cytoplasm. Essential multidomain scaffolding protein required for normal development. Recruits channels, receptors and signaling molecules to discrete plasma membrane domains in polarized cells. Promotes epithelial cell layer barrier function via maintaining cell-cell adhesion. May also play a role in adherens junction assembly, signal transduction, cell proliferation, synaptogenesis and lymphocyte activation. Regulates the excitability of cardiac myocytes by modulating the functional expression of Kv4 channels. Functional regulator of Kv1.5 channel. During long-term depression in hippocampal neurons, it recruits ADAM10 to the plasma membrane. This is Disks large homolog 1 from Homo sapiens (Human).